We begin with the raw amino-acid sequence, 302 residues long: Nucleotide-binding protein Bcenmc03_2806 (302 aa).

8–15 (GISGSGKS) is an ATP binding site. 57–60 (DARS) contacts GTP.

The protein belongs to the RapZ-like family.

Displays ATPase and GTPase activities. The chain is Nucleotide-binding protein Bcenmc03_2806 from Burkholderia orbicola (strain MC0-3).